The primary structure comprises 339 residues: Protein pelota homolog (339 aa).

The protein belongs to the eukaryotic release factor 1 family. Pelota subfamily. Monomer. A divalent metal cation serves as cofactor.

Its subcellular location is the cytoplasm. Functionally, may function in recognizing stalled ribosomes, interact with stem-loop structures in stalled mRNA molecules, and effect endonucleolytic cleavage of the mRNA. May play a role in the release non-functional ribosomes and degradation of damaged mRNAs. Has endoribonuclease activity. The polypeptide is Protein pelota homolog (Picrophilus torridus (strain ATCC 700027 / DSM 9790 / JCM 10055 / NBRC 100828 / KAW 2/3)).